The chain runs to 697 residues: PAN2-PAN3 deadenylation complex subunit PAN3 (697 aa).

The segment at 7 to 36 (TAKDTLCKNILIYGYCKYENKGCAFSHNRQ) adopts a C3H1-type zinc-finger fold. Residues 40–67 (QQQQATNTSNNSTSVITPNSANSTASSA) form a disordered region. Short sequence motifs (PABPC-interacting motif-2 (PAM-2)) lie at residues 69 to 89 (LSSK…VSNL) and 106 to 126 (FKPE…TQRP). Positions 106 to 240 (FKPENGVSEP…SAPTPGSETP (135 aa)) are disordered. The span at 119–153 (DSPTTQRPFTSKRFNVSTPSFTPTNFDFANNSNAD) shows a compositional bias: polar residues. A compositionally biased stretch (low complexity) spans 172 to 187 (QNQQQQQQQQQQQQKQ). Polar residues predominate over residues 212-224 (GVSQSSPSTNPYF). The tract at residues 308–576 (QSLSHSNLPE…DLNEFSQRLT (269 aa)) is pseudokinase domain. ATP contacts are provided by residues R361, 416-423 (DYYPNSIS), and 470-471 (SK). The stretch at 577–615 (PKMFNIIDSLQNSSDFIEGQLTSELENARLFRLMTKLNY) forms a coiled coil. Residues 616–697 (LIHDNSNSEN…IDTKFRLMRE (82 aa)) are knob domain.

The protein belongs to the protein kinase superfamily. PAN3 family. In terms of assembly, homodimer. Forms a heterotrimer with a catalytic subunit PAN2 to form the poly(A)-nuclease (PAN) deadenylation complex. Interacts (via PAM-2 motif) with poly(A)-binding protein PAB1 (via PABC domain), conferring substrate specificity of the enzyme complex.

It is found in the cytoplasm. Functionally, regulatory subunit of the poly(A)-nuclease (PAN) deadenylation complex, one of two cytoplasmic mRNA deadenylases involved in mRNA turnover. PAN specifically shortens poly(A) tails of RNA and the activity is stimulated by poly(A)-binding protein PAB1. PAN deadenylation is followed by rapid degradation of the shortened mRNA tails by the CCR4-NOT complex. Deadenylated mRNAs are then degraded by two alternative mechanisms, namely exosome-mediated 3'-5' exonucleolytic degradation, or deadenylation-dependent mRNA decaping and subsequent 5'-3' exonucleolytic degradation by XRN1. May also be involved in post-transcriptional maturation of mRNA poly(A) tails. PAN3 acts as a positive regulator for PAN activity, recruiting the catalytic subunit PAN2 to mRNA via its interaction with RNA and with PAB1. In Candida albicans (strain SC5314 / ATCC MYA-2876) (Yeast), this protein is PAN2-PAN3 deadenylation complex subunit PAN3.